A 264-amino-acid chain; its full sequence is Glutamate racemase (264 aa).

Substrate-binding positions include 10 to 11 (DS) and 42 to 43 (YG). The active-site Proton donor/acceptor is C73. A substrate-binding site is contributed by 74–75 (NT). Catalysis depends on C183, which acts as the Proton donor/acceptor. 184-185 (TH) lines the substrate pocket.

It belongs to the aspartate/glutamate racemases family.

It carries out the reaction L-glutamate = D-glutamate. It participates in cell wall biogenesis; peptidoglycan biosynthesis. Provides the (R)-glutamate required for cell wall biosynthesis. The polypeptide is Glutamate racemase (Streptococcus agalactiae serotype Ia (strain ATCC 27591 / A909 / CDC SS700)).